A 360-amino-acid polypeptide reads, in one-letter code: Phenylalanine--tRNA ligase alpha subunit (360 aa).

Position 260 (glutamate 260) interacts with Mg(2+).

This sequence belongs to the class-II aminoacyl-tRNA synthetase family. Phe-tRNA synthetase alpha subunit type 1 subfamily. In terms of assembly, tetramer of two alpha and two beta subunits. Mg(2+) is required as a cofactor.

It localises to the cytoplasm. It carries out the reaction tRNA(Phe) + L-phenylalanine + ATP = L-phenylalanyl-tRNA(Phe) + AMP + diphosphate + H(+). This chain is Phenylalanine--tRNA ligase alpha subunit, found in Methylobacterium radiotolerans (strain ATCC 27329 / DSM 1819 / JCM 2831 / NBRC 15690 / NCIMB 10815 / 0-1).